A 79-amino-acid polypeptide reads, in one-letter code: Protein OPG081 (79 aa).

The Intravirion portion of the chain corresponds to 1–3; it reads MAD. A helical transmembrane segment spans residues 4 to 24; it reads AITVLTAIGITVLMLLMVISG. Topologically, residues 25-47 are virion surface; that stretch reads TAMIVKELNPNDIFTMQSLKFNR. The chain crosses the membrane as a helical span at residues 48-68; the sequence is AVTIFKYIGLFIYIPGTIILY. At 69–79 the chain is on the intravirion side; sequence ATYIKSLLMKS.

The protein belongs to the orthopoxvirus OPG081 family.

The protein resides in the virion membrane. Its function is as follows. Envelope protein. The polypeptide is Protein OPG081 (OPG081) (Variola virus).